A 656-amino-acid polypeptide reads, in one-letter code: DNA ligase (656 aa).

NAD(+) is bound by residues 32 to 36 (DAVYD) and 81 to 82 (SL). The active-site N6-AMP-lysine intermediate is the K112. 3 residues coordinate NAD(+): R133, E167, and K306. Positions 400, 403, 416, and 421 each coordinate Zn(2+). One can recognise a BRCT domain in the interval 577 to 656 (KSSSVFSDKT…ELLKRLKELD (80 aa)).

The protein belongs to the NAD-dependent DNA ligase family. LigA subfamily. Mg(2+) is required as a cofactor. The cofactor is Mn(2+).

It catalyses the reaction NAD(+) + (deoxyribonucleotide)n-3'-hydroxyl + 5'-phospho-(deoxyribonucleotide)m = (deoxyribonucleotide)n+m + AMP + beta-nicotinamide D-nucleotide.. DNA ligase that catalyzes the formation of phosphodiester linkages between 5'-phosphoryl and 3'-hydroxyl groups in double-stranded DNA using NAD as a coenzyme and as the energy source for the reaction. It is essential for DNA replication and repair of damaged DNA. This is DNA ligase from Helicobacter pylori (strain J99 / ATCC 700824) (Campylobacter pylori J99).